We begin with the raw amino-acid sequence, 148 residues long: uncharacterized protein (148 aa).

The tract at residues 122–148 (HNWRKRMGTRRGRHEQSPTSRPRKGPD) is disordered. The span at 123–134 (NWRKRMGTRRGR) shows a compositional bias: basic residues.

This is an uncharacterized protein from Homo sapiens (Human).